We begin with the raw amino-acid sequence, 1185 residues long: Chromosome partition protein Smc (1185 aa).

ATP is bound at residue 32–39 (PNGSGKSN). Residues 167-494 (ISKYKSRKMD…KLNEKNSHLS (328 aa)) adopt a coiled-coil conformation. One can recognise an SMC hinge domain in the interval 521-639 (TGIIGVVADQ…TDLKSAIEIA (119 aa)). A coiled-coil region spans residues 677–1031 (RSRKIEDLKK…KVIQEIEETM (355 aa)).

Belongs to the SMC family. In terms of assembly, homodimer.

The protein localises to the cytoplasm. In terms of biological role, required for chromosome condensation and partitioning. The chain is Chromosome partition protein Smc from Halothermothrix orenii (strain H 168 / OCM 544 / DSM 9562).